The primary structure comprises 352 residues: Heat-inducible transcription repressor HrcA (352 aa).

It belongs to the HrcA family.

Functionally, negative regulator of class I heat shock genes (grpE-dnaK-dnaJ and groELS operons). Prevents heat-shock induction of these operons. This Lactobacillus gasseri (strain ATCC 33323 / DSM 20243 / BCRC 14619 / CIP 102991 / JCM 1131 / KCTC 3163 / NCIMB 11718 / NCTC 13722 / AM63) protein is Heat-inducible transcription repressor HrcA.